The following is a 205-amino-acid chain: COMM domain-containing protein 5 (205 aa).

In terms of domain architecture, COMM spans 130–194 (QLSSFKWRVD…KLLKDLEDLE (65 aa)).

This sequence belongs to the COMM domain-containing protein 5 family. In terms of assembly, component of the commander complex consisting of the CCC subcomplex and the retriever subcomplex. Component of the CCC subcomplex.

Scaffold protein in the commander complex that is essential for endosomal recycling of transmembrane cargos; the commander complex is composed of the CCC subcomplex and the retriever subcomplex. The chain is COMM domain-containing protein 5 (commd5) from Dictyostelium discoideum (Social amoeba).